Here is a 130-residue protein sequence, read N- to C-terminus: DNA-binding protein HU (130 aa).

This sequence belongs to the bacterial histone-like protein family.

Histone-like DNA-binding protein which is capable of wrapping DNA to stabilize it, and thus to prevent its denaturation under extreme environmental conditions. The chain is DNA-binding protein HU (hup) from Ureaplasma parvum serovar 3 (strain ATCC 700970).